The chain runs to 82 residues: UPF0235 protein Pden_2174 (82 aa).

The protein belongs to the UPF0235 family.

The chain is UPF0235 protein Pden_2174 from Paracoccus denitrificans (strain Pd 1222).